The chain runs to 678 residues: Serine/threonine-protein kinase PLK (678 aa).

A Protein kinase domain is found at 22–309 (YRPGKLLGKG…VKECLDHSWL (288 aa)). Residues 28–36 (LGKGGFAYV) and Lys51 contribute to the ATP site. Catalysis depends on Asp145, which acts as the Proton acceptor. Phosphothreonine; by autocatalysis is present on residues Thr179 and Thr183. POLO box domains lie at 435-516 (YIMS…YLEN) and 563-644 (FLKK…IIKA). The tract at residues 658-678 (KDSTKKSASGSSTRQLGQGGE) is disordered. The span at 663 to 678 (KSASGSSTRQLGQGGE) shows a compositional bias: polar residues.

The protein belongs to the protein kinase superfamily. Ser/Thr protein kinase family. CDC5/Polo subfamily. In terms of assembly, interacts with Kin-13. Autophosphorylated. Autophosphorylation is critical for its function in cell growth, cytokinesis and formation of flagella.

It localises to the cell projection. The protein localises to the cilium. The protein resides in the flagellum. Its subcellular location is the cytoplasm. It is found in the cytoskeleton. It localises to the flagellum basal body. The protein localises to the flagellum axoneme. The protein resides in the spindle. Its subcellular location is the membrane. It catalyses the reaction L-seryl-[protein] + ATP = O-phospho-L-seryl-[protein] + ADP + H(+). It carries out the reaction L-threonyl-[protein] + ATP = O-phospho-L-threonyl-[protein] + ADP + H(+). Inhibited by GW843286X (GW), an ATP-competitive inhibitor. Inhibition leads to reduced growth, increased number of cells with more than four nuclei, increased number of cells with condensed nuclei, cell cycle arrest at G2/M or G1/S phase depending on the treatment time with GW, and increased length of membrane-bound portions of the caudal and anterior flagella. Its function is as follows. Involved in cell cycle. Involved in cell division. Involved in cytokinesis. Involved in flagella biogenesis and in regulation of flagella length in interphase. Involved in formation of median bodies during interphase. Phosphorylates Kin-13 in vitro. Likely regulates microtubule (MT) depolymerizing activity of Kin-13. The polypeptide is Serine/threonine-protein kinase PLK (Giardia intestinalis (strain ATCC 50803 / WB clone C6) (Giardia lamblia)).